We begin with the raw amino-acid sequence, 252 residues long: 2-succinyl-6-hydroxy-2,4-cyclohexadiene-1-carboxylate synthase (252 aa).

It belongs to the AB hydrolase superfamily. MenH family. In terms of assembly, monomer.

It catalyses the reaction 5-enolpyruvoyl-6-hydroxy-2-succinyl-cyclohex-3-ene-1-carboxylate = (1R,6R)-6-hydroxy-2-succinyl-cyclohexa-2,4-diene-1-carboxylate + pyruvate. It participates in quinol/quinone metabolism; 1,4-dihydroxy-2-naphthoate biosynthesis; 1,4-dihydroxy-2-naphthoate from chorismate: step 3/7. Its pathway is quinol/quinone metabolism; menaquinone biosynthesis. Functionally, catalyzes a proton abstraction reaction that results in 2,5-elimination of pyruvate from 2-succinyl-5-enolpyruvyl-6-hydroxy-3-cyclohexene-1-carboxylate (SEPHCHC) and the formation of 2-succinyl-6-hydroxy-2,4-cyclohexadiene-1-carboxylate (SHCHC). The protein is 2-succinyl-6-hydroxy-2,4-cyclohexadiene-1-carboxylate synthase of Klebsiella pneumoniae (strain 342).